The primary structure comprises 638 residues: Meiosis initiator protein (638 aa).

Disordered regions lie at residues 1–21, 60–79, 138–249, 404–433, and 447–537; these read MFGS…SLGP, NQRN…KNHT, LAGL…KGGQ, PSAY…SLHR, and GNSK…PCPP. Positions 7-20 are enriched in polar residues; it reads YLGSSEQPRANSLG. The segment at 62-75 is basic motif; degenerate; that stretch reads RNQNKLLSPNKKQR. The bHLH domain occupies 62–116; sequence RNQNKLLSPNKKQRKNHTSKLQELALLLPIALKTGTKKLTKKEILVHVLQYIQYL. The helix-loop-helix motif stretch occupies residues 76-116; it reads KNHTSKLQELALLLPIALKTGTKKLTKKEILVHVLQYIQYL. Low complexity predominate over residues 157 to 167; the sequence is TPSSSPSSQKS. The segment covering 182–191 has biased composition (polar residues); it reads TQASESQTRT. Over residues 412 to 430 the composition is skewed to basic and acidic residues; sequence PQEKDTASKAPKDPPESHS. The span at 453 to 465 shows a compositional bias: low complexity; it reads SSSSSSSSSSSSS. Residues 528 to 537 show a composition bias toward basic residues; it reads KEKKKGPCPP. A DNA-binding region (HMG box) is located at residues 540–608; that stretch reads KKKCVNGFIM…QHNRIVKQDG (69 aa).

As to quaternary structure, interacts with STRA8.

The protein resides in the nucleus. Gatekeeper of meiotic initiation in both male and female germ cells. In complex with STRA8, directly activates the transcription of a subset of critical meiotic genes playing a central role in cell-cycle switching from mitosis to meiosis. Temporal expression of MEIOSIN is required for meiotic entry decision. This is Meiosis initiator protein from Homo sapiens (Human).